A 251-amino-acid chain; its full sequence is Ubiquinone/menaquinone biosynthesis C-methyltransferase UbiE (251 aa).

S-adenosyl-L-methionine contacts are provided by residues Thr-74, Asp-95, 123–124 (NA), and Ser-140.

This sequence belongs to the class I-like SAM-binding methyltransferase superfamily. MenG/UbiE family.

The catalysed reaction is a 2-demethylmenaquinol + S-adenosyl-L-methionine = a menaquinol + S-adenosyl-L-homocysteine + H(+). It carries out the reaction a 2-methoxy-6-(all-trans-polyprenyl)benzene-1,4-diol + S-adenosyl-L-methionine = a 5-methoxy-2-methyl-3-(all-trans-polyprenyl)benzene-1,4-diol + S-adenosyl-L-homocysteine + H(+). Its pathway is quinol/quinone metabolism; menaquinone biosynthesis; menaquinol from 1,4-dihydroxy-2-naphthoate: step 2/2. It participates in cofactor biosynthesis; ubiquinone biosynthesis. Its function is as follows. Methyltransferase required for the conversion of demethylmenaquinol (DMKH2) to menaquinol (MKH2) and the conversion of 2-polyprenyl-6-methoxy-1,4-benzoquinol (DDMQH2) to 2-polyprenyl-3-methyl-6-methoxy-1,4-benzoquinol (DMQH2). In Proteus mirabilis (strain HI4320), this protein is Ubiquinone/menaquinone biosynthesis C-methyltransferase UbiE.